The primary structure comprises 673 residues: Pesticin receptor (673 aa).

The first 22 residues, 1 to 22 (MKMTRLYPLALGGLLLPAIANA), serve as a signal peptide directing secretion. A TonB box motif is present at residues 30–37 (STLVVTAS). Residues 41-155 (SRSASANNVS…QGGIINIVTQ (115 aa)) enclose the TBDR plug domain. A TBDR beta-barrel domain is found at 160–672 (TPRGYIEGGV…TVGINTRIDF (513 aa)). Residues 657–673 (QVNMGRTVGINTRIDFF) carry the TonB C-terminal box motif.

It belongs to the TonB-dependent receptor family.

It is found in the cell outer membrane. In terms of biological role, receptor for the bacteriocin pesticin and for the siderophore yersiniabactin. The sequence is that of Pesticin receptor (fyuA) from Yersinia pestis.